The sequence spans 573 residues: Cytochrome P450 monooxygenase GME11363 (573 aa).

Residues 10–30 (IGVVAAVLLAALILLYRAALP) form a helical membrane-spanning segment. Cys519 contacts heme.

The protein belongs to the cytochrome P450 family. It depends on heme as a cofactor.

Its subcellular location is the membrane. Its pathway is secondary metabolite biosynthesis. Cytochrome P450 monooxygenase; part of the gene cluster that mediates the biosynthesis of dibenzodioxocinones such as pestalotiollide B, a novel class of inhibitors against cholesterol ester transfer protein (CEPT). The biosynthesis initiates from condensation of acetate and malonate units catalyzed by the non-reducing PKS pks8/GME11356. Pks8/GME11356 lacks a thioesterase (TE) domain, which is important to the cyclizing of the third ring of atrochrysone carboxylic acid, and the esterase GME11355 might play the role of TE and catalyzes the cyclization reaction of the C ring. The lactamase-like protein GME11357 (or other beta-lactamases in Pestalotiopsis microspora) probably hydrolyzes the thioester bond between the ACP of pks8/GME11356 and the intermediate to release atrochrysone carboxylic acid, which is spontaneously dehydrates to form endocrocin anthrone. Endocrocin anthrone is further converted to emodin via the endocrocin intermediate. Emodin is then oxidized by several enzymes such as the Baeyer-Villiger oxidase GME11358, the oxidoreductase GME11367, the short chain dehydrogenase/reductase GME11373, as well as by other oxidoreductases from the cluster, to modify the A and C rings and open the B ring, and finally yield monodictyphenone. The prenyltransferase GME11375 may catalyze the addition reaction between the C5 side chains and the carbon bone of dibenzodioxocinones. The remaining biochemical reactions to the final product dibenzodioxocinones should be methylation catalyzed by methyltransferase GME11366 and reduction and lactonization reaction catalyzed by a series of oxidordeuctases. This is Cytochrome P450 monooxygenase GME11363 from Pestalotiopsis microspora.